Here is a 310-residue protein sequence, read N- to C-terminus: MENITEVTEFILMGFTDNADLEILSFFLFLAIYLFTLMGNLGLITLVIGDSRLHNPMYYFLSVLSSVDACYSTVITPQMVVDFVSEKKVISFIGCATQMFLAVTFGTTECFLLAAMAYDRYVAIHNPLMYVVSMSPRVYVPLIIASYAGGILHAVIHTVATFRLSFCGSNKISHIFCDIPPLLAISCSDTHFNQLLLFYCAGFIEVVTILIVLLSYGFILSVILKTRSTEGKRKVFSTCGSHLMAVSTFHGTVLFMYVRPSDSYALEHDMMVSIFYSIVIPMLNPLIYSLRNKDVKEAIKKVFGKRILCG.

The Extracellular portion of the chain corresponds to 1-23 (MENITEVTEFILMGFTDNADLEI). A glycan (N-linked (GlcNAc...) asparagine) is linked at N3. A helical transmembrane segment spans residues 24-44 (LSFFLFLAIYLFTLMGNLGLI). Residues 45-52 (TLVIGDSR) are Cytoplasmic-facing. Residues 53-73 (LHNPMYYFLSVLSSVDACYST) form a helical membrane-spanning segment. Residues 74-97 (VITPQMVVDFVSEKKVISFIGCAT) lie on the Extracellular side of the membrane. C95 and C187 are disulfide-bonded. The helical transmembrane segment at 98-118 (QMFLAVTFGTTECFLLAAMAY) threads the bilayer. Residues 119 to 131 (DRYVAIHNPLMYV) are Cytoplasmic-facing. A helical membrane pass occupies residues 132 to 152 (VSMSPRVYVPLIIASYAGGIL). Residues 153-194 (HAVIHTVATFRLSFCGSNKISHIFCDIPPLLAISCSDTHFNQ) are Extracellular-facing. The chain crosses the membrane as a helical span at residues 195–215 (LLLFYCAGFIEVVTILIVLLS). Residues 216–235 (YGFILSVILKTRSTEGKRKV) lie on the Cytoplasmic side of the membrane. The chain crosses the membrane as a helical span at residues 236–256 (FSTCGSHLMAVSTFHGTVLFM). Residues 257-269 (YVRPSDSYALEHD) are Extracellular-facing. The helical transmembrane segment at 270–290 (MMVSIFYSIVIPMLNPLIYSL) threads the bilayer. Over 291 to 310 (RNKDVKEAIKKVFGKRILCG) the chain is Cytoplasmic.

The protein belongs to the G-protein coupled receptor 1 family.

The protein resides in the cell membrane. In terms of biological role, potential odorant receptor. The polypeptide is Olfactory receptor 5T7 (Mus musculus (Mouse)).